Here is a 344-residue protein sequence, read N- to C-terminus: Hyoscyamine 6-dioxygenase (344 aa).

The Fe2OG dioxygenase domain occupies 193-293 (QIQMMLTNYY…RVSIATLIGP (101 aa)). The Fe cation site is built by His217, Asp219, and His274. Residue Arg284 coordinates 2-oxoglutarate.

Belongs to the iron/ascorbate-dependent oxidoreductase family. As to quaternary structure, monomer. The cofactor is Fe(2+). L-ascorbate serves as cofactor. The N-terminus is blocked. In terms of tissue distribution, root.

It catalyses the reaction L-hyoscyamine + 2-oxoglutarate + O2 = (6S)-6-hydroxyhyoscyamine + succinate + CO2. It participates in alkaloid biosynthesis; scopolamine biosynthesis. The chain is Hyoscyamine 6-dioxygenase (H6H) from Hyoscyamus niger (Black henbane).